The chain runs to 561 residues: Putative transport protein KPK_3686 (561 aa).

5 consecutive transmembrane segments (helical) span residues 8–28, 37–57, 66–86, 94–114, and 158–178; these read LLNGNYILLLFVVLALGLCLG, LGNSIGVLVVSLLLGQQHFAI, FMLFIFCVGVEAGPNFFSIFF, MLALVMVGSAMLIATVLGKVF, and HLSLGYALTYLVGLVSLIVGA. RCK C-terminal domains lie at 202–288 and 292–373; these read LDTD…SFRN and VFDR…RIGF. 5 helical membrane passes run 383 to 403, 406 to 426, 447 to 467, 478 to 498, and 540 to 560; these read LLAFCAFFIVGLMIGMITFQF, FSFGIGNAAGLLFAGIMLGFL, FGLMVFMAGVGLSAGAGINNG, AGLIVSLLPVVICFLFGAYVL, and AIANVLLTLAGTLIVIIWPGL.

It belongs to the AAE transporter (TC 2.A.81) family. YbjL subfamily.

It localises to the cell membrane. The chain is Putative transport protein KPK_3686 from Klebsiella pneumoniae (strain 342).